The following is a 458-amino-acid chain: F-box/LRR-repeat protein At5g02910 (458 aa).

In terms of domain architecture, F-box spans 10–56 (MDFISSLPDEILHHILSSVPTKSAIRTSLLSKRWRYVWSETPSLSID). LRR repeat units lie at residues 57 to 84 (CRRA…HLHT), 86 to 112 (LLNR…SLES), 133 to 161 (KQLF…LSLS), 162 to 187 (NCTL…ELLY), 226 to 251 (CLRL…DLNI), 260 to 285 (TAGF…TIGG), 325 to 353 (KLLR…HLND), and 389 to 414 (ESNL…VVLL).

The polypeptide is F-box/LRR-repeat protein At5g02910 (Arabidopsis thaliana (Mouse-ear cress)).